The chain runs to 213 residues: Ribosome maturation factor RimM (213 aa).

Positions 99–175 (DQDAAYISDL…RITMRLPEGL (77 aa)) constitute a PRC barrel domain. Positions 182 to 213 (TATAREPRARRTRKRGLRKPITGADATPPDSQ) are disordered. Over residues 189–199 (RARRTRKRGLR) the composition is skewed to basic residues.

Belongs to the RimM family. As to quaternary structure, binds ribosomal protein uS19.

It is found in the cytoplasm. Functionally, an accessory protein needed during the final step in the assembly of 30S ribosomal subunit, possibly for assembly of the head region. Essential for efficient processing of 16S rRNA. May be needed both before and after RbfA during the maturation of 16S rRNA. It has affinity for free ribosomal 30S subunits but not for 70S ribosomes. In Acidobacterium capsulatum (strain ATCC 51196 / DSM 11244 / BCRC 80197 / JCM 7670 / NBRC 15755 / NCIMB 13165 / 161), this protein is Ribosome maturation factor RimM.